Here is a 92-residue protein sequence, read N- to C-terminus: MARSLKKGPFVADHLLSKIEKLNEKGEKQVIKTWSRASTIIPDMVGHTIAVHNGKQHVPIFISEQMVGHKLGEFAPTRTFRGHAKSDKKARR.

This sequence belongs to the universal ribosomal protein uS19 family.

In terms of biological role, protein S19 forms a complex with S13 that binds strongly to the 16S ribosomal RNA. The sequence is that of Small ribosomal subunit protein uS19 from Gloeothece citriformis (strain PCC 7424) (Cyanothece sp. (strain PCC 7424)).